Consider the following 116-residue polypeptide: Large ribosomal subunit protein bL19 (116 aa).

Belongs to the bacterial ribosomal protein bL19 family.

In terms of biological role, this protein is located at the 30S-50S ribosomal subunit interface and may play a role in the structure and function of the aminoacyl-tRNA binding site. The polypeptide is Large ribosomal subunit protein bL19 (Lactobacillus gasseri (strain ATCC 33323 / DSM 20243 / BCRC 14619 / CIP 102991 / JCM 1131 / KCTC 3163 / NCIMB 11718 / NCTC 13722 / AM63)).